Consider the following 199-residue polypeptide: MIKKDPIELFDLWYNEVLAVSLQDKKDPTAMVLATCSKDLKPSARVVLLKKYSDQGFVFFTNMNSRKGKEMAENPSVALVFDWSRISKQVRIEGRIKMLPCNDADEYYASRPRGSQIGAWCSKQSSVLENREDFVELIKEMTIKFHEKPIPRPDYWVGIVVVPMLMEFWQEGLNRIHTRYQYTRDSNNMDKWNVVSLYP.

FMN is bound by residues 45–50 (RVVLLK), 60–61 (FT), Arg66, Lys67, and Gln89. A substrate-binding site is contributed by Lys50. Substrate is bound by residues Tyr107, Arg111, and Ser115. FMN is bound by residues 124 to 125 (QS) and Trp169. Residue 175–177 (RIH) coordinates substrate. Arg179 is a binding site for FMN.

Belongs to the pyridoxamine 5'-phosphate oxidase family. As to quaternary structure, homodimer. Requires FMN as cofactor.

The catalysed reaction is pyridoxamine 5'-phosphate + O2 + H2O = pyridoxal 5'-phosphate + H2O2 + NH4(+). It catalyses the reaction pyridoxine 5'-phosphate + O2 = pyridoxal 5'-phosphate + H2O2. It functions in the pathway cofactor metabolism; pyridoxal 5'-phosphate salvage; pyridoxal 5'-phosphate from pyridoxamine 5'-phosphate: step 1/1. It participates in cofactor metabolism; pyridoxal 5'-phosphate salvage; pyridoxal 5'-phosphate from pyridoxine 5'-phosphate: step 1/1. Functionally, catalyzes the oxidation of either pyridoxine 5'-phosphate (PNP) or pyridoxamine 5'-phosphate (PMP) into pyridoxal 5'-phosphate (PLP). The sequence is that of Pyridoxine/pyridoxamine 5'-phosphate oxidase from Ehrlichia chaffeensis (strain ATCC CRL-10679 / Arkansas).